The sequence spans 217 residues: Large ribosomal subunit protein uL4 (217 aa).

Residues 58–90 form a disordered region; that stretch reads TAATKGRSDVSGGGKKPWRQKGTGRARSGTSRS.

The protein belongs to the universal ribosomal protein uL4 family. In terms of assembly, part of the 50S ribosomal subunit.

In terms of biological role, one of the primary rRNA binding proteins, this protein initially binds near the 5'-end of the 23S rRNA. It is important during the early stages of 50S assembly. It makes multiple contacts with different domains of the 23S rRNA in the assembled 50S subunit and ribosome. Forms part of the polypeptide exit tunnel. This Syntrophus aciditrophicus (strain SB) protein is Large ribosomal subunit protein uL4.